Here is a 126-residue protein sequence, read N- to C-terminus: MSKLYFTEDHEWVSVDDDGIGTIGITDYAQKQLGDVVFVELPEIGREIERGGDAAVVESVKAASEVYSPVSGEVVEANDSLPEAPGQVNTDALGDGWFFKVRLSEPAELDELMDQEAYDAFVGELD.

One can recognise a Lipoyl-binding domain in the interval 20 to 102 (IGTIGITDYA…LGDGWFFKVR (83 aa)). Residue K61 is modified to N6-lipoyllysine.

The protein belongs to the GcvH family. The glycine cleavage system is composed of four proteins: P, T, L and H. (R)-lipoate is required as a cofactor.

Functionally, the glycine cleavage system catalyzes the degradation of glycine. The H protein shuttles the methylamine group of glycine from the P protein to the T protein. The sequence is that of Glycine cleavage system H protein from Rhodospirillum rubrum (strain ATCC 11170 / ATH 1.1.1 / DSM 467 / LMG 4362 / NCIMB 8255 / S1).